The primary structure comprises 461 residues: Chromosomal replication initiator protein DnaA (461 aa).

The tract at residues 1–87 (MAVSLWQQCI…IGSRPSAKPV (87 aa)) is domain I, interacts with DnaA modulators. Residues 87-124 (VVQATAAVRTSRPVTREVTKPSFNTPHAEPMANANHRS) form a domain II region. A disordered region spans residues 99–125 (PVTREVTKPSFNTPHAEPMANANHRSN). The segment at 125–341 (NINPTYQFDN…GALNRVIANA (217 aa)) is domain III, AAA+ region. ATP contacts are provided by Gly-169, Gly-171, Lys-172, and Thr-173. The interval 342–461 (NFTGRPITID…YANLIRTLSS (120 aa)) is domain IV, binds dsDNA.

The protein belongs to the DnaA family. In terms of assembly, oligomerizes as a right-handed, spiral filament on DNA at oriC.

It localises to the cytoplasm. Its function is as follows. Plays an essential role in the initiation and regulation of chromosomal replication. ATP-DnaA binds to the origin of replication (oriC) to initiate formation of the DNA replication initiation complex once per cell cycle. Binds the DnaA box (a 9 base pair repeat at the origin) and separates the double-stranded (ds)DNA. Forms a right-handed helical filament on oriC DNA; dsDNA binds to the exterior of the filament while single-stranded (ss)DNA is stabiized in the filament's interior. The ATP-DnaA-oriC complex binds and stabilizes one strand of the AT-rich DNA unwinding element (DUE), permitting loading of DNA polymerase. After initiation quickly degrades to an ADP-DnaA complex that is not apt for DNA replication. Binds acidic phospholipids. The chain is Chromosomal replication initiator protein DnaA from Shewanella pealeana (strain ATCC 700345 / ANG-SQ1).